A 144-amino-acid polypeptide reads, in one-letter code: Bacilliredoxin BCE_2233 (144 aa).

The protein belongs to the bacilliredoxin family.

This Bacillus cereus (strain ATCC 10987 / NRS 248) protein is Bacilliredoxin BCE_2233.